A 361-amino-acid chain; its full sequence is Phospho-N-acetylmuramoyl-pentapeptide-transferase (361 aa).

The next 10 membrane-spanning stretches (helical) occupy residues 27-47 (GAIV…ISTL), 72-92 (TPTM…LLWA), 94-114 (LSNL…LIGF), 133-153 (ARLA…INAG), 169-189 (LLLD…VAAG), 200-220 (GLAI…SYLS), 237-257 (VGEL…FLWF), 264-284 (IFMG…IAVA), 289-309 (IVLA…IVQV), and 338-358 (QVVI…LATL).

The protein belongs to the glycosyltransferase 4 family. MraY subfamily. It depends on Mg(2+) as a cofactor.

It localises to the cell inner membrane. The enzyme catalyses UDP-N-acetyl-alpha-D-muramoyl-L-alanyl-gamma-D-glutamyl-meso-2,6-diaminopimeloyl-D-alanyl-D-alanine + di-trans,octa-cis-undecaprenyl phosphate = di-trans,octa-cis-undecaprenyl diphospho-N-acetyl-alpha-D-muramoyl-L-alanyl-D-glutamyl-meso-2,6-diaminopimeloyl-D-alanyl-D-alanine + UMP. It participates in cell wall biogenesis; peptidoglycan biosynthesis. Functionally, catalyzes the initial step of the lipid cycle reactions in the biosynthesis of the cell wall peptidoglycan: transfers peptidoglycan precursor phospho-MurNAc-pentapeptide from UDP-MurNAc-pentapeptide onto the lipid carrier undecaprenyl phosphate, yielding undecaprenyl-pyrophosphoryl-MurNAc-pentapeptide, known as lipid I. The chain is Phospho-N-acetylmuramoyl-pentapeptide-transferase from Azorhizobium caulinodans (strain ATCC 43989 / DSM 5975 / JCM 20966 / LMG 6465 / NBRC 14845 / NCIMB 13405 / ORS 571).